A 585-amino-acid chain; its full sequence is Arginine--tRNA ligase (585 aa).

The 'HIGH' region motif lies at 131-141; that stretch reads ANPTGPMHVGH.

It belongs to the class-I aminoacyl-tRNA synthetase family. As to quaternary structure, monomer.

The protein resides in the cytoplasm. It catalyses the reaction tRNA(Arg) + L-arginine + ATP = L-arginyl-tRNA(Arg) + AMP + diphosphate. In Brucella abortus (strain S19), this protein is Arginine--tRNA ligase.